The following is a 68-amino-acid chain: Translational regulator CsrA 1 (68 aa).

Belongs to the CsrA/RsmA family. As to quaternary structure, homodimer; the beta-strands of each monomer intercalate to form a hydrophobic core, while the alpha-helices form wings that extend away from the core.

The protein resides in the cytoplasm. Functionally, a key translational regulator that binds mRNA to regulate translation initiation and/or mRNA stability. Mediates global changes in gene expression, shifting from rapid growth to stress survival by linking envelope stress, the stringent response and the catabolite repression systems. Usually binds in the 5'-UTR; binding at or near the Shine-Dalgarno sequence prevents ribosome-binding, repressing translation, binding elsewhere in the 5'-UTR can activate translation and/or stabilize the mRNA. Its function is antagonized by small RNA(s). The polypeptide is Translational regulator CsrA 1 (Coxiella burnetii (strain RSA 493 / Nine Mile phase I)).